The following is an 88-amino-acid chain: Small ribosomal subunit protein uS17 (88 aa).

The protein belongs to the universal ribosomal protein uS17 family. As to quaternary structure, part of the 30S ribosomal subunit.

One of the primary rRNA binding proteins, it binds specifically to the 5'-end of 16S ribosomal RNA. The chain is Small ribosomal subunit protein uS17 from Syntrophotalea carbinolica (strain DSM 2380 / NBRC 103641 / GraBd1) (Pelobacter carbinolicus).